Consider the following 742-residue polypeptide: Pyriculol/pyriculariol biosynthesis cluster transcription factor 1 (742 aa).

The segment at residues 23-49 is a DNA-binding region (zn(2)-C6 fungal-type); that stretch reads CVLCQHRKIKCDRSFPCANCQRANVQC. The segment at 85–116 is disordered; it reads GKPDIARLTTKRSSLSQSPPKGEEPLPEWNRH. Basic and acidic residues predominate over residues 105–116; that stretch reads KGEEPLPEWNRH.

The protein localises to the nucleus. Functionally, transcriptional regulator; part of the gene cluster that mediates the biosynthesis of pyriculol and pyriculariol, two heptaketides that induce lesion formation upon application on rice leaves but are dispensable for pathogenicity. With TRF2, negatively regulates the expression of the gene cluster and the subsequent pyriculol and pyriculariol production. This Pyricularia oryzae (strain 70-15 / ATCC MYA-4617 / FGSC 8958) (Rice blast fungus) protein is Pyriculol/pyriculariol biosynthesis cluster transcription factor 1.